A 230-amino-acid polypeptide reads, in one-letter code: uncharacterized protein (230 aa).

The ABC transporter domain maps to 2-230; it reads IQLSNVRKSY…ASSGQRSVGE (229 aa). Residue 38-45 coordinates ATP; it reads GPSGSGKS.

Belongs to the ABC transporter superfamily. As to quaternary structure, part of a complex composed of YknX, YknY and YknZ. The complex interacts with YknW.

The protein localises to the cell membrane. Its function is as follows. Part of an unusual four-component transporter, which is required for protection against the killing factor SdpC (sporulation-delaying protein). This is an uncharacterized protein from Bacillus subtilis (strain 168).